We begin with the raw amino-acid sequence, 213 residues long: Methylthioribulose-1-phosphate dehydratase (213 aa).

Residues His-104 and His-106 each contribute to the Zn(2+) site.

The protein belongs to the aldolase class II family. MtnB subfamily. It depends on Zn(2+) as a cofactor.

It catalyses the reaction 5-(methylsulfanyl)-D-ribulose 1-phosphate = 5-methylsulfanyl-2,3-dioxopentyl phosphate + H2O. It functions in the pathway amino-acid biosynthesis; L-methionine biosynthesis via salvage pathway; L-methionine from S-methyl-5-thio-alpha-D-ribose 1-phosphate: step 2/6. Catalyzes the dehydration of methylthioribulose-1-phosphate (MTRu-1-P) into 2,3-diketo-5-methylthiopentyl-1-phosphate (DK-MTP-1-P). The chain is Methylthioribulose-1-phosphate dehydratase from Stenotrophomonas maltophilia (strain R551-3).